A 914-amino-acid chain; its full sequence is Beta-mannosidase A (914 aa).

The first 20 residues, 1–20, serve as a signal peptide directing secretion; the sequence is MRFTATAAALVASSIPATLG. Asparagine 39, asparagine 79, asparagine 230, asparagine 265, asparagine 299, asparagine 309, and asparagine 330 each carry an N-linked (GlcNAc...) asparagine glycan. The Proton donor role is filled by glutamate 462. 8 N-linked (GlcNAc...) asparagine glycosylation sites follow: asparagine 591, asparagine 614, asparagine 641, asparagine 721, asparagine 744, asparagine 773, asparagine 784, and asparagine 909.

This sequence belongs to the glycosyl hydrolase 2 family. Beta-mannosidase A subfamily. Homodimer.

It localises to the secreted. The enzyme catalyses Hydrolysis of terminal, non-reducing beta-D-mannose residues in beta-D-mannosides.. The protein operates within glycan metabolism; N-glycan degradation. Exoglycosidase that cleaves the single beta-linked mannose residue from the non-reducing end of beta-mannosidic oligosaccharides of various complexity and length. Involved in the degradation of polymeric mannan and galactomannan. The polypeptide is Beta-mannosidase A (mndA) (Aspergillus flavus (strain ATCC 200026 / FGSC A1120 / IAM 13836 / NRRL 3357 / JCM 12722 / SRRC 167)).